Consider the following 281-residue polypeptide: Bifunctional protein FolD (281 aa).

Residues 165 to 167 (GRG), Thr-192, and Val-233 each bind NADP(+).

It belongs to the tetrahydrofolate dehydrogenase/cyclohydrolase family. In terms of assembly, homodimer.

It carries out the reaction (6R)-5,10-methylene-5,6,7,8-tetrahydrofolate + NADP(+) = (6R)-5,10-methenyltetrahydrofolate + NADPH. It catalyses the reaction (6R)-5,10-methenyltetrahydrofolate + H2O = (6R)-10-formyltetrahydrofolate + H(+). It functions in the pathway one-carbon metabolism; tetrahydrofolate interconversion. Catalyzes the oxidation of 5,10-methylenetetrahydrofolate to 5,10-methenyltetrahydrofolate and then the hydrolysis of 5,10-methenyltetrahydrofolate to 10-formyltetrahydrofolate. This Mycolicibacterium paratuberculosis (strain ATCC BAA-968 / K-10) (Mycobacterium paratuberculosis) protein is Bifunctional protein FolD.